The sequence spans 706 residues: MEAQADAGGDDLAAMREQCRSLEEAIGFRRETQMGLVASLQRLVPDLVPSLDRSLRIIAAFNDRPFVPTPNPDGGHGKSPAALKPHHRRALPDPARSTRRKTSPGSSPASVAAAPGGLDAVRTMVAVCLLELVPFAEIDAAALARRLQAESSSASEAERTALADLAAELGGSAASAVVLALRRIAEDTGGVQIEEAMIGGKSMTMVWAIDRNKLLKELPESATLPLLQPPPAPQMPPSETDAGSAMIPRTPQQQQPQPDMWPHSMPPIFPRPRGMTMQGMQRVPGVPPGLMPLQRPFMGPAGVITMGGGVGPSPNQQKQKSEEDELKDLELLLNKKTYREKQNTKTGEELLDLIHRPTAKETAVAAKFKTKGGSQLKEYCTNLTKEDCRRQSGSFVACDKVHFRRIIAPHTDTNLGDCSFLDTCRHTKTCKYVHYELDQTPDIPPMMAGALAPPRQIRLQRAEYCSEVELGEAQWINCDIRNFRMDILGQFGVIMADPPWDIHMELPYGTMADDEMRTLNVPALQTDGLIFLWVTGRAMELGRECLELWGYKRVEEIIWVKTNQLQRIIRTGRTGHWLNHSKEHCLVGIKGNPLVNRNIDTDVIVAEVRETSRKPDEMYPMLERISPRTRKLELFARMHNAHAGWLSLGNQLNGVRLVDEGLRARYKAAYPDSEVQPPSPPRASAPIDGDQGTSQKPTVSDGERPA.

Disordered stretches follow at residues 64–114 and 223–261; these read RPFV…VAAA and TLPL…PDMW. Residues 103–114 are compositionally biased toward low complexity; that stretch reads SPGSSPASVAAA. Over residues 227-236 the composition is skewed to pro residues; the sequence is LQPPPAPQMP. S-adenosyl-L-methionine contacts are provided by residues 479–480 and aspartate 497; that span reads DI. The tract at residues 567-580 is positively charged region required for RNA-binding; sequence RIIRTGRTGHWLNH. Residues lysine 614, 637–640, and 650–651 contribute to the S-adenosyl-L-methionine site; these read RMHN and NQ. The interval 669 to 706 is disordered; the sequence is AYPDSEVQPPSPPRASAPIDGDQGTSQKPTVSDGERPA.

Belongs to the MT-A70-like family.

It localises to the nucleus. The catalysed reaction is an adenosine in mRNA + S-adenosyl-L-methionine = an N(6)-methyladenosine in mRNA + S-adenosyl-L-homocysteine + H(+). In terms of biological role, probable N6-methyltransferase that methylates adenosine residues of some mRNAs. N6-methyladenosine (m6A), which is present at internal sites of some mRNAs, may play a role in the efficiency of mRNA splicing, transport or translation. The chain is Probable N(6)-adenosine-methyltransferase MT-A70-like from Oryza sativa subsp. japonica (Rice).